The sequence spans 156 residues: ATP synthase subunit b (156 aa).

A helical transmembrane segment spans residues 7 to 29 (LFGQTIAFAIFVWFCMKFVWPPL).

This sequence belongs to the ATPase B chain family. In terms of assembly, F-type ATPases have 2 components, F(1) - the catalytic core - and F(0) - the membrane proton channel. F(1) has five subunits: alpha(3), beta(3), gamma(1), delta(1), epsilon(1). F(0) has three main subunits: a(1), b(2) and c(10-14). The alpha and beta chains form an alternating ring which encloses part of the gamma chain. F(1) is attached to F(0) by a central stalk formed by the gamma and epsilon chains, while a peripheral stalk is formed by the delta and b chains.

The protein localises to the cell inner membrane. F(1)F(0) ATP synthase produces ATP from ADP in the presence of a proton or sodium gradient. F-type ATPases consist of two structural domains, F(1) containing the extramembraneous catalytic core and F(0) containing the membrane proton channel, linked together by a central stalk and a peripheral stalk. During catalysis, ATP synthesis in the catalytic domain of F(1) is coupled via a rotary mechanism of the central stalk subunits to proton translocation. In terms of biological role, component of the F(0) channel, it forms part of the peripheral stalk, linking F(1) to F(0). This Ectopseudomonas mendocina (strain ymp) (Pseudomonas mendocina) protein is ATP synthase subunit b.